Consider the following 423-residue polypeptide: Anthranilate 1,2-dioxygenase large subunit (423 aa).

One can recognise a Rieske domain in the interval 53–168 (WNFVALEAEI…VDSYRGLVFA (116 aa)). [2Fe-2S] cluster-binding residues include Cys-95, His-97, Cys-115, and His-118. Residues His-223, His-228, and Asp-370 each contribute to the Fe cation site.

This sequence belongs to the bacterial ring-hydroxylating dioxygenase alpha subunit family. Part of a multicomponent enzyme system composed of a reductase (AndAa), a ferredoxin (AndAb) and a two-subunit oxygenase component (AndAc and AndAd). It depends on Fe cation as a cofactor. Requires [2Fe-2S] cluster as cofactor.

The enzyme catalyses anthranilate + NADH + O2 + 3 H(+) = catechol + NH4(+) + CO2 + NAD(+). It carries out the reaction anthranilate + NADPH + O2 + 3 H(+) = catechol + NH4(+) + CO2 + NADP(+). It participates in aromatic compound metabolism; anthranilate degradation via hydroxylation; catechol from anthranilate: step 1/1. Its function is as follows. Oxygenase component of anthranilate dioxygenase multicomponent enzyme system which catalyzes the incorporation of both atoms of molecular oxygen into anthranilate to form catechol. Can also act on benzoate and salicylate but not on 2-chlorobenzoate or o-toluate. This Burkholderia cepacia (Pseudomonas cepacia) protein is Anthranilate 1,2-dioxygenase large subunit.